We begin with the raw amino-acid sequence, 202 residues long: Peptide deformylase (202 aa).

The tract at residues Met-1–Glu-24 is disordered. Residues Cys-121 and His-163 each contribute to the Fe cation site. The active site involves Glu-164. His-167 lines the Fe cation pocket.

Belongs to the polypeptide deformylase family. The cofactor is Fe(2+).

The catalysed reaction is N-terminal N-formyl-L-methionyl-[peptide] + H2O = N-terminal L-methionyl-[peptide] + formate. Removes the formyl group from the N-terminal Met of newly synthesized proteins. Requires at least a dipeptide for an efficient rate of reaction. N-terminal L-methionine is a prerequisite for activity but the enzyme has broad specificity at other positions. This is Peptide deformylase from Prochlorococcus marinus (strain NATL2A).